The sequence spans 235 residues: (5-formylfuran-3-yl)methyl phosphate synthase (235 aa).

Residue lysine 27 is the Schiff-base intermediate with substrate of the active site. The active-site Proton acceptor is lysine 85.

Belongs to the MfnB family. Homohexamer. Trimer of dimers.

It carries out the reaction 2 D-glyceraldehyde 3-phosphate = 4-(hydroxymethyl)-2-furancarboxaldehyde phosphate + phosphate + 2 H2O. Its pathway is cofactor biosynthesis; methanofuran biosynthesis. Its function is as follows. Catalyzes the formation of 4-(hydroxymethyl)-2-furancarboxaldehyde phosphate (4-HFC-P) from two molecules of glyceraldehyde-3-P (GA-3-P). This chain is (5-formylfuran-3-yl)methyl phosphate synthase, found in Methanocaldococcus jannaschii (strain ATCC 43067 / DSM 2661 / JAL-1 / JCM 10045 / NBRC 100440) (Methanococcus jannaschii).